The chain runs to 265 residues: Speedy protein E8 (265 aa).

The disordered stretch occupies residues 1–80; that stretch reads MGQILGKIMM…EPEKELAPEP (80 aa). The span at 66–80 shows a compositional bias: acidic residues; the sequence is DESDDEPEKELAPEP.

Belongs to the Speedy/Ringo family.

The sequence is that of Speedy protein E8 from Homo sapiens (Human).